The primary structure comprises 243 residues: Transmembrane protein 174 (243 aa).

The next 2 helical transmembrane spans lie at leucine 40–isoleucine 60 and leucine 73–phenylalanine 93.

Interacts with SLC34A1; regulates SLC34A1 internalization by PTH and FGF23. In terms of tissue distribution, predominantly expressed in kidney. Selectively localized in the apical membrane of renal proximal tubule epithelial cells.

Its subcellular location is the endoplasmic reticulum membrane. It localises to the apical cell membrane. Functionally, regulator of plasma phosphate homeostasis. Decreases serum inorganic phosphate (Pi) uptake by regulating the sodium-phosphate cotransporter SLC34A1 trafficking by PTH and FGF23 in the kidney. The protein is Transmembrane protein 174 (TMEM174) of Homo sapiens (Human).